Consider the following 129-residue polypeptide: MARKTNTRKRRVKKNIESGIAHIRSTFNNTIVTITDTRGNAIGWSSAGALGFKGSKKSTPFAAQMAAETAAKSAIENGMKTLEVTVKGPGAGREAAIRSLQAAGLEVTAIVDVTPVPHNGCRPPKRRRV.

The protein belongs to the universal ribosomal protein uS11 family. As to quaternary structure, part of the 30S ribosomal subunit. Interacts with proteins S7 and S18. Binds to IF-3.

Located on the platform of the 30S subunit, it bridges several disparate RNA helices of the 16S rRNA. Forms part of the Shine-Dalgarno cleft in the 70S ribosome. In Oceanobacillus iheyensis (strain DSM 14371 / CIP 107618 / JCM 11309 / KCTC 3954 / HTE831), this protein is Small ribosomal subunit protein uS11.